Consider the following 292-residue polypeptide: UPF0696 protein C11orf68 (292 aa).

A compositionally biased stretch (low complexity) spans 1–11 (MAAAAAAAVAG). A disordered region spans residues 1 to 60 (MAAAAAAAVAGVGRGGGGAEPRQERSRARGWAGVERSEGRRMEPGEELEEEGSPGGREDG). Arg29 carries the post-translational modification Omega-N-methylarginine. A compositionally biased stretch (basic and acidic residues) spans 35 to 44 (ERSEGRRMEP).

Belongs to the UPF0696 family.

The sequence is that of UPF0696 protein C11orf68 (C11orf68) from Homo sapiens (Human).